We begin with the raw amino-acid sequence, 590 residues long: Cyclin-dependent kinase-like 3 (590 aa).

A Protein kinase domain is found at 4-286 (YETLGKVGEG…SSDLLHHEYF (283 aa)). ATP is bound by residues 10 to 18 (VGEGSYGTV) and K33. Residues 45 to 51 (KIAMREI) carry the [NKR]KIAxRE motif. The Proton acceptor role is filled by D125. Position 158 is a phosphothreonine (T158). At Y160 the chain carries Phosphotyrosine. Disordered stretches follow at residues 459-508 (RAKK…SNEN) and 547-590 (LKRE…PDVE). The span at 466–477 (SSQSIGQVMPNS) shows a compositional bias: polar residues. 2 stretches are compositionally biased toward basic and acidic residues: residues 547-556 (LKRESKKTDS) and 580-590 (TERKKNLPDVE).

It belongs to the protein kinase superfamily. CMGC Ser/Thr protein kinase family. CDC2/CDKX subfamily.

The protein resides in the cytoplasm. It catalyses the reaction L-seryl-[protein] + ATP = O-phospho-L-seryl-[protein] + ADP + H(+). The enzyme catalyses L-threonyl-[protein] + ATP = O-phospho-L-threonyl-[protein] + ADP + H(+). The sequence is that of Cyclin-dependent kinase-like 3 from Macaca fascicularis (Crab-eating macaque).